A 238-amino-acid polypeptide reads, in one-letter code: Probable transglycosylase SceD 1 (238 aa).

The first 27 residues, 1 to 27 (MKKTVVASTLAVGLGVTGFAAGNSADA), serve as a signal peptide directing secretion. The segment covering 87-97 (TNAPAQETAEQ) has biased composition (polar residues). A disordered region spans residues 87-161 (TNAPAQETAE…SEASEGSSVN (75 aa)). Residues 102-156 (EQPQQTEQASTEQPAQEAAPQTEETQQPQQEATTQTTSSSNESTSNESSSSEASE) show a composition bias toward low complexity.

The protein belongs to the transglycosylase family. SceD subfamily.

It localises to the secreted. Is able to cleave peptidoglycan and affects clumping and separation of bacterial cells. The polypeptide is Probable transglycosylase SceD 1 (sceD1) (Staphylococcus saprophyticus subsp. saprophyticus (strain ATCC 15305 / DSM 20229 / NCIMB 8711 / NCTC 7292 / S-41)).